Reading from the N-terminus, the 744-residue chain is Phosphoribosylformylglycinamidine synthase subunit PurL (744 aa).

H45 is a catalytic residue. Positions 48 and 87 each coordinate ATP. E89 contributes to the Mg(2+) binding site. Substrate-binding positions include 90 to 93 (SHNH) and R112. H91 (proton acceptor) is an active-site residue. D113 provides a ligand contact to Mg(2+). Q236 is a binding site for substrate. D264 is a binding site for Mg(2+). 308–310 (ESQ) serves as a coordination point for substrate. 2 residues coordinate ATP: N492 and G529. N530 contacts Mg(2+). S532 serves as a coordination point for substrate.

This sequence belongs to the FGAMS family. As to quaternary structure, monomer. Part of the FGAM synthase complex composed of 1 PurL, 1 PurQ and 2 PurS subunits.

It is found in the cytoplasm. The catalysed reaction is N(2)-formyl-N(1)-(5-phospho-beta-D-ribosyl)glycinamide + L-glutamine + ATP + H2O = 2-formamido-N(1)-(5-O-phospho-beta-D-ribosyl)acetamidine + L-glutamate + ADP + phosphate + H(+). The protein operates within purine metabolism; IMP biosynthesis via de novo pathway; 5-amino-1-(5-phospho-D-ribosyl)imidazole from N(2)-formyl-N(1)-(5-phospho-D-ribosyl)glycinamide: step 1/2. Part of the phosphoribosylformylglycinamidine synthase complex involved in the purines biosynthetic pathway. Catalyzes the ATP-dependent conversion of formylglycinamide ribonucleotide (FGAR) and glutamine to yield formylglycinamidine ribonucleotide (FGAM) and glutamate. The FGAM synthase complex is composed of three subunits. PurQ produces an ammonia molecule by converting glutamine to glutamate. PurL transfers the ammonia molecule to FGAR to form FGAM in an ATP-dependent manner. PurS interacts with PurQ and PurL and is thought to assist in the transfer of the ammonia molecule from PurQ to PurL. This is Phosphoribosylformylglycinamidine synthase subunit PurL from Erythrobacter litoralis (strain HTCC2594).